A 290-amino-acid chain; its full sequence is Probable ATP-dependent kinase TDA10 (290 aa).

Residue Gly38 to Ser45 participates in ATP binding.

Belongs to the GLYK kinase family.

It is found in the cytoplasm. The protein localises to the nucleus. Functionally, ATP-dependent kinase whose specificity is not yet known. This is Probable ATP-dependent kinase TDA10 (TDA10) from Saccharomyces cerevisiae (strain ATCC 204508 / S288c) (Baker's yeast).